A 591-amino-acid polypeptide reads, in one-letter code: Oxaloacetate decarboxylase alpha chain (591 aa).

Residues 3–263 (IAITDVVLRD…DTGLDILKLE (261 aa)) enclose the Pyruvate carboxyltransferase domain. One can recognise a Biotinyl-binding domain in the interval 518 to 591 (PAGAGTPVTA…SVGDTLMTLA (74 aa)). Lys-557 carries the post-translational modification N6-biotinyllysine.

In terms of assembly, composed of three chains (alpha, beta, and gamma). It depends on biotin as a cofactor.

It catalyses the reaction oxaloacetate + 2 Na(+)(in) + H(+) = pyruvate + 2 Na(+)(out) + CO2. Its function is as follows. Catalyzes the decarboxylation of oxaloacetate coupled to Na(+) translocation. This chain is Oxaloacetate decarboxylase alpha chain (oadA1), found in Salmonella typhi.